Here is a 378-residue protein sequence, read N- to C-terminus: Succinyl-diaminopimelate desuccinylase (378 aa).

His68 is a Zn(2+) binding site. Residue Asp70 is part of the active site. Residue Asp101 coordinates Zn(2+). The Proton acceptor role is filled by Glu135. Zn(2+) is bound by residues Glu136, Glu164, and His350.

The protein belongs to the peptidase M20A family. DapE subfamily. As to quaternary structure, homodimer. Zn(2+) is required as a cofactor. It depends on Co(2+) as a cofactor.

The enzyme catalyses N-succinyl-(2S,6S)-2,6-diaminopimelate + H2O = (2S,6S)-2,6-diaminopimelate + succinate. The protein operates within amino-acid biosynthesis; L-lysine biosynthesis via DAP pathway; LL-2,6-diaminopimelate from (S)-tetrahydrodipicolinate (succinylase route): step 3/3. Functionally, catalyzes the hydrolysis of N-succinyl-L,L-diaminopimelic acid (SDAP), forming succinate and LL-2,6-diaminopimelate (DAP), an intermediate involved in the bacterial biosynthesis of lysine and meso-diaminopimelic acid, an essential component of bacterial cell walls. The polypeptide is Succinyl-diaminopimelate desuccinylase (Vibrio campbellii (strain ATCC BAA-1116)).